A 129-amino-acid chain; its full sequence is M-zodatoxin-Lt8h (129 aa).

The first 20 residues, 1–20 (MKYFVVALALVAAFACIAES), serve as a signal peptide directing secretion. Residues 21–60 (KPAESEHELAEVEEENELADLEDAVWLEDLADLSDLEETR) constitute a propeptide that is removed on maturation.

This sequence belongs to the cationic peptide 06 (cytoinsectotoxin) family. Expressed by the venom gland.

The protein localises to the secreted. Functionally, insecticidal, cytolytic and antimicrobial peptide. Has insecticidal activity against the flesh fly S.carnaria. Has antibacterial activity against the Gram-negative bacteria E.coli. Forms voltage-dependent, ion-permeable channels in membranes. At high concentration causes cell membrane lysis. In Lachesana tarabaevi (Spider), this protein is M-zodatoxin-Lt8h (cit 1-11).